We begin with the raw amino-acid sequence, 118 residues long: V-type proton ATPase subunit G 1 (118 aa).

A2 carries the N-acetylalanine modification. The tract at residues 25–90 (ARKRKARRLK…VQGMQSSQQR (66 aa)) is disordered. Residues 35–56 (QAKEEAQMEVEQYRREREHEFQ) are compositionally biased toward basic and acidic residues. Composition is skewed to polar residues over residues 57–69 (SKQQ…QGNL) and 78–89 (RHQVQGMQSSQQ).

The protein belongs to the V-ATPase G subunit family. V-ATPase is a heteromultimeric enzyme made up of two complexes: the ATP-hydrolytic V1 complex and the proton translocation V0 complex. The V1 complex consists of three catalytic AB heterodimers that form a heterohexamer, three peripheral stalks each consisting of EG heterodimers, one central rotor including subunits D and F, and the regulatory subunits C and H. The proton translocation complex V0 consists of the proton transport subunit a, a ring of proteolipid subunits c9c'', rotary subunit d, subunits e and f, and the accessory subunits ATP6AP1/Ac45 and ATP6AP2/PRR.

It localises to the apical cell membrane. Subunit of the V1 complex of vacuolar(H+)-ATPase (V-ATPase), a multisubunit enzyme composed of a peripheral complex (V1) that hydrolyzes ATP and a membrane integral complex (V0) that translocates protons. V-ATPase is responsible for acidifying and maintaining the pH of intracellular compartments and in some cell types, is targeted to the plasma membrane, where it is responsible for acidifying the extracellular environment. In aerobic conditions, involved in intracellular iron homeostasis, thus triggering the activity of Fe(2+) prolyl hydroxylase (PHD) enzymes, and leading to HIF1A hydroxylation and subsequent proteasomal degradation. This is V-type proton ATPase subunit G 1 (ATP6V1G1) from Pan troglodytes (Chimpanzee).